A 612-amino-acid polypeptide reads, in one-letter code: Dihydroxy-acid dehydratase (612 aa).

D81 contacts Mg(2+). A [2Fe-2S] cluster-binding site is contributed by C122. The Mg(2+) site is built by D123 and K124. K124 carries the N6-carboxylysine modification. C195 contributes to the [2Fe-2S] cluster binding site. E491 serves as a coordination point for Mg(2+). The active-site Proton acceptor is the S517.

This sequence belongs to the IlvD/Edd family. As to quaternary structure, homodimer. The cofactor is [2Fe-2S] cluster. It depends on Mg(2+) as a cofactor.

The enzyme catalyses (2R)-2,3-dihydroxy-3-methylbutanoate = 3-methyl-2-oxobutanoate + H2O. It carries out the reaction (2R,3R)-2,3-dihydroxy-3-methylpentanoate = (S)-3-methyl-2-oxopentanoate + H2O. It functions in the pathway amino-acid biosynthesis; L-isoleucine biosynthesis; L-isoleucine from 2-oxobutanoate: step 3/4. Its pathway is amino-acid biosynthesis; L-valine biosynthesis; L-valine from pyruvate: step 3/4. In terms of biological role, functions in the biosynthesis of branched-chain amino acids. Catalyzes the dehydration of (2R,3R)-2,3-dihydroxy-3-methylpentanoate (2,3-dihydroxy-3-methylvalerate) into 2-oxo-3-methylpentanoate (2-oxo-3-methylvalerate) and of (2R)-2,3-dihydroxy-3-methylbutanoate (2,3-dihydroxyisovalerate) into 2-oxo-3-methylbutanoate (2-oxoisovalerate), the penultimate precursor to L-isoleucine and L-valine, respectively. This Bartonella henselae (strain ATCC 49882 / DSM 28221 / CCUG 30454 / Houston 1) (Rochalimaea henselae) protein is Dihydroxy-acid dehydratase.